Consider the following 86-residue polypeptide: Large ribosomal subunit protein bL27 (86 aa).

The tract at residues Met-1–Ser-26 is disordered.

Belongs to the bacterial ribosomal protein bL27 family.

This Rickettsia typhi (strain ATCC VR-144 / Wilmington) protein is Large ribosomal subunit protein bL27.